We begin with the raw amino-acid sequence, 762 residues long: Probable inorganic carbon transporter subunit DabA (762 aa).

Positions 279, 281, 461, and 476 each coordinate Zn(2+).

It belongs to the inorganic carbon transporter (TC 9.A.2) DabA family. As to quaternary structure, forms a complex with DabB. It depends on Zn(2+) as a cofactor.

It is found in the cell inner membrane. Part of an energy-coupled inorganic carbon pump. The chain is Probable inorganic carbon transporter subunit DabA from Legionella pneumophila subsp. pneumophila (strain Philadelphia 1 / ATCC 33152 / DSM 7513).